A 54-amino-acid polypeptide reads, in one-letter code: Ferredoxin (54 aa).

4Fe-4S ferredoxin-type domains lie at 2–25 (YVINDSCIACGACKPECPVNIQQG) and 26–54 (SIYAIDADSCIDCGSCASVCPVGAPNPED). [4Fe-4S] cluster contacts are provided by C8, C11, C14, C18, C35, C38, C41, and C45.

The cofactor is [4Fe-4S] cluster.

Ferredoxins are iron-sulfur proteins that transfer electrons in a wide variety of metabolic reactions. In Peptoniphilus asaccharolyticus (Peptostreptococcus asaccharolyticus), this protein is Ferredoxin.